The chain runs to 72 residues: MAKEDVIEVEGTVIEPLPNAMFRVELENGHKILAHVSGKIRMHFIRILPGDKVTVELSPYDLTRGRITYRYK.

An S1-like domain is found at Ala2–Lys72. Tyr60 carries the post-translational modification Phosphotyrosine.

It belongs to the IF-1 family. Component of the 30S ribosomal translation pre-initiation complex which assembles on the 30S ribosome in the order IF-2 and IF-3, IF-1 and N-formylmethionyl-tRNA(fMet); mRNA recruitment can occur at any time during PIC assembly.

It localises to the cytoplasm. In terms of biological role, one of the essential components for the initiation of protein synthesis. Stabilizes the binding of IF-2 and IF-3 on the 30S subunit to which N-formylmethionyl-tRNA(fMet) subsequently binds. Helps modulate mRNA selection, yielding the 30S pre-initiation complex (PIC). Upon addition of the 50S ribosomal subunit IF-1, IF-2 and IF-3 are released leaving the mature 70S translation initiation complex. The polypeptide is Translation initiation factor IF-1 (Halalkalibacterium halodurans (strain ATCC BAA-125 / DSM 18197 / FERM 7344 / JCM 9153 / C-125) (Bacillus halodurans)).